A 503-amino-acid polypeptide reads, in one-letter code: Maturase K (503 aa).

Belongs to the intron maturase 2 family. MatK subfamily.

Its subcellular location is the plastid. The protein localises to the chloroplast. Usually encoded in the trnK tRNA gene intron. Probably assists in splicing its own and other chloroplast group II introns. In Diospyros virginiana (American persimmon), this protein is Maturase K.